We begin with the raw amino-acid sequence, 324 residues long: Phospho-N-acetylmuramoyl-pentapeptide-transferase (324 aa).

The next 10 helical transmembrane spans lie at 5 to 25, 52 to 72, 77 to 97, 117 to 137, 147 to 167, 176 to 196, 202 to 222, 227 to 247, 253 to 273, and 302 to 322; these read GLLV…PLFI, PTMG…IMAI, LGAE…IGFL, LLGQ…QGFD, ITFD…IGGS, LDGL…IIAV, AVAI…VFNA, VFMG…VAIL, LLVI…IQVI, and VVVT…YIGV.

It belongs to the glycosyltransferase 4 family. MraY subfamily. Mg(2+) is required as a cofactor.

The protein resides in the cell membrane. It carries out the reaction UDP-N-acetyl-alpha-D-muramoyl-L-alanyl-gamma-D-glutamyl-meso-2,6-diaminopimeloyl-D-alanyl-D-alanine + di-trans,octa-cis-undecaprenyl phosphate = di-trans,octa-cis-undecaprenyl diphospho-N-acetyl-alpha-D-muramoyl-L-alanyl-D-glutamyl-meso-2,6-diaminopimeloyl-D-alanyl-D-alanine + UMP. It participates in cell wall biogenesis; peptidoglycan biosynthesis. Functionally, catalyzes the initial step of the lipid cycle reactions in the biosynthesis of the cell wall peptidoglycan: transfers peptidoglycan precursor phospho-MurNAc-pentapeptide from UDP-MurNAc-pentapeptide onto the lipid carrier undecaprenyl phosphate, yielding undecaprenyl-pyrophosphoryl-MurNAc-pentapeptide, known as lipid I. The chain is Phospho-N-acetylmuramoyl-pentapeptide-transferase from Bacillus cytotoxicus (strain DSM 22905 / CIP 110041 / 391-98 / NVH 391-98).